Consider the following 841-residue polypeptide: uncharacterized protein (841 aa).

The signal sequence occupies residues methionine 1 to alanine 31.

The protein resides in the secreted. This is an uncharacterized protein from Schizosaccharomyces pombe (strain 972 / ATCC 24843) (Fission yeast).